Reading from the N-terminus, the 518-residue chain is Nuclear receptor ROR-gamma (518 aa).

The segment at 1 to 30 is modulating; sequence MDRAPQRQHRASRELLAAKKTHTSQIEVIP. 2 consecutive NR C4-type zinc fingers follow at residues 31 to 51 and 67 to 91; these read CKICGDKSSGIHYGVITCEGC and CTRQQNCPIDRTSRNRCQHCRLQKC. Residues 31–96 constitute a DNA-binding region (nuclear receptor); sequence CKICGDKSSG…RLQKCLALGM (66 aa). 2 disordered regions span residues 105-183 and 238-258; these read RMSK…SGSG and HPGLGELGQGPDSYGSPSFRS. The span at 109–118 shows a compositional bias: basic and acidic residues; that stretch reads KQRDSLHAEV. Over residues 119 to 130 the composition is skewed to low complexity; the sequence is QKQLQQRQQQQQ. One can recognise an NR LBD domain in the interval 269 to 508; sequence EIEHLVQSVC…PPLYKELFST (240 aa). Positions 501 to 506 match the AF-2 motif; sequence LYKELF.

Belongs to the nuclear hormone receptor family. NR1 subfamily. As to quaternary structure, interacts (via AF-2 motif) with the coactivator NCOA2 (via LXXLL motif). Interacts with the corepressor NCOR1. Interacts with CRY1. Interacts (via AF-2 motif) with the coactivators NCOA1 and PPARGC1A (via LXXLL motif). Interacts (via AF-2 motif) with PROX1. Interacts with FOXP3. Interacts with NR0B2. Isoform 1 is widely expressed in many tissues, including liver and adipose, and highly expressed in skeletal muscle. Isoform 2 is primarily expressed in immature thymocytes.

It localises to the nucleus. In terms of biological role, nuclear receptor that binds DNA as a monomer to ROR response elements (RORE) containing a single core motif half-site 5'-AGGTCA-3' preceded by a short A-T-rich sequence. Key regulator of cellular differentiation, immunity, peripheral circadian rhythm as well as lipid, steroid, xenobiotics and glucose metabolism. Considered to have intrinsic transcriptional activity, have some natural ligands like oxysterols that act as agonists (25-hydroxycholesterol) or inverse agonists (7-oxygenated sterols), enhancing or repressing the transcriptional activity, respectively. Recruits distinct combinations of cofactors to target gene regulatory regions to modulate their transcriptional expression, depending on the tissue, time and promoter contexts. Regulates the circadian expression of clock genes such as CRY1, BMAL1 and NR1D1 in peripheral tissues and in a tissue-selective manner. Competes with NR1D1 for binding to their shared DNA response element on some clock genes such as BMAL1, CRY1 and NR1D1 itself, resulting in NR1D1-mediated repression or RORC-mediated activation of the expression, leading to the circadian pattern of clock genes expression. Therefore influences the period length and stability of the clock. Involved in the regulation of the rhythmic expression of genes involved in glucose and lipid metabolism, including PLIN2 and AVPR1A. Negative regulator of adipocyte differentiation through the regulation of early phase genes expression, such as MMP3. Controls adipogenesis as well as adipocyte size and modulates insulin sensitivity in obesity. In liver, has specific and redundant functions with RORA as positive or negative modulator of expression of genes encoding phase I and Phase II proteins involved in the metabolism of lipids, steroids and xenobiotics, such as SULT1E1. Also plays a role in the regulation of hepatocyte glucose metabolism through the regulation of G6PC1 and PCK1. Regulates the rhythmic expression of PROX1 and promotes its nuclear localization. Plays an indispensable role in the induction of IFN-gamma dependent anti-mycobacterial systemic immunity. Its function is as follows. Essential for thymopoiesis and the development of several secondary lymphoid tissues, including lymph nodes and Peyer's patches. Required for the generation of LTi (lymphoid tissue inducer) cells. Regulates thymocyte survival through DNA-binding on ROREs of target gene promoter regions and recruitment of coactivaros via the AF-2. Also plays a key role, downstream of IL6 and TGFB and synergistically with RORA, for lineage specification of uncommitted CD4(+) T-helper (T(H)) cells into T(H)17 cells, antagonizing the T(H)1 program. Probably regulates IL17 and IL17F expression on T(H) by binding to the essential enhancer conserved non-coding sequence 2 (CNS2) in the IL17-IL17F locus. May also play a role in the pre-TCR activation cascade leading to the maturation of alpha/beta T-cells and may participate in the regulation of DNA accessibility in the TCR-J(alpha) locus. The chain is Nuclear receptor ROR-gamma (RORC) from Homo sapiens (Human).